A 267-amino-acid chain; its full sequence is Cell division protein FtsQ (267 aa).

Residues 1–32 (MRKKTSSNKKKQTKKTNNISLRRKLRLIYKKA) lie on the Cytoplasmic side of the membrane. Residues 33–53 (ILGLKIALIIFVCLFVFTKYF) traverse the membrane as a helical segment. The Periplasmic segment spans residues 54-267 (AGIKTYLTTN…DKNKYYIEKY (214 aa)). The POTRA domain occupies 73–141 (FKLENVIIEG…NTVYIKLFER (69 aa)).

Belongs to the FtsQ/DivIB family. FtsQ subfamily.

The protein resides in the cell inner membrane. Functionally, essential cell division protein. This is Cell division protein FtsQ from Rickettsia felis (strain ATCC VR-1525 / URRWXCal2) (Rickettsia azadi).